The sequence spans 243 residues: tRNA1(Val) (adenine(37)-N6)-methyltransferase (243 aa).

The protein belongs to the methyltransferase superfamily. tRNA (adenine-N(6)-)-methyltransferase family.

It is found in the cytoplasm. It carries out the reaction adenosine(37) in tRNA1(Val) + S-adenosyl-L-methionine = N(6)-methyladenosine(37) in tRNA1(Val) + S-adenosyl-L-homocysteine + H(+). Its function is as follows. Specifically methylates the adenine in position 37 of tRNA(1)(Val) (anticodon cmo5UAC). The polypeptide is tRNA1(Val) (adenine(37)-N6)-methyltransferase (Shewanella woodyi (strain ATCC 51908 / MS32)).